Here is a 433-residue protein sequence, read N- to C-terminus: Enolase (433 aa).

Glutamine 167 contributes to the (2R)-2-phosphoglycerate binding site. Residue glutamate 209 is the Proton donor of the active site. Residues aspartate 246, glutamate 291, and aspartate 318 each coordinate Mg(2+). (2R)-2-phosphoglycerate-binding residues include lysine 343, arginine 372, serine 373, and lysine 394. The active-site Proton acceptor is the lysine 343.

Belongs to the enolase family. As to quaternary structure, component of the RNA degradosome, a multiprotein complex involved in RNA processing and mRNA degradation. Mg(2+) is required as a cofactor.

The protein localises to the cytoplasm. Its subcellular location is the secreted. It is found in the cell surface. The enzyme catalyses (2R)-2-phosphoglycerate = phosphoenolpyruvate + H2O. It participates in carbohydrate degradation; glycolysis; pyruvate from D-glyceraldehyde 3-phosphate: step 4/5. In terms of biological role, catalyzes the reversible conversion of 2-phosphoglycerate (2-PG) into phosphoenolpyruvate (PEP). It is essential for the degradation of carbohydrates via glycolysis. This Vibrio vulnificus (strain YJ016) protein is Enolase.